A 492-amino-acid polypeptide reads, in one-letter code: MKTNFLAFGMSTLVAKNIGSITQVIGPVLDVAFSPGKMPNIYNSLIVKDQNSAGEEINVTCEVQQLLGNNKVRAVAMSATDGMMRGMKVIDTGAPLTVPVGEATLGRIFNVLGEPVDNLGPVEVTTTFPIHRAAPAFTQLDTKLSIFETGIKVVDLLAPYRRGGKIGLFGGAGVGKTVLIMELINNILKAHGGVSVFGGVGERTREGNDLYMEMKESKVINEQNISESKVALVYGQMNEPPGARMRVGLTALTMAEYFRDVNKQDVLLFIDNIFRFVQAGSEVSALLGRMPSAVGYQPTLSTEMGTLQERITSTKEGSITSIQAVYVPADDLTDPAPATTFAHLDATTVLSRGLAAKGIYPAVDPLDSTSTMLQPWIVGEEHYETAQGVKQTLQRYKELQDIIAILGLDELSEEDRLTVARARKIERFLSQPFFVAEVFTGSPGKYVSLRETIKGFQMILSGELDSLPEQAFYLVGNIDEATAKAATLQVES.

170-177 (GGAGVGKT) is an ATP binding site.

This sequence belongs to the ATPase alpha/beta chains family. In terms of assembly, F-type ATPases have 2 components, CF(1) - the catalytic core - and CF(0) - the membrane proton channel. CF(1) has five subunits: alpha(3), beta(3), gamma(1), delta(1), epsilon(1). CF(0) has four main subunits: a(1), b(1), b'(1) and c(9-12).

It localises to the plastid. The protein resides in the chloroplast thylakoid membrane. The catalysed reaction is ATP + H2O + 4 H(+)(in) = ADP + phosphate + 5 H(+)(out). Its function is as follows. Produces ATP from ADP in the presence of a proton gradient across the membrane. The catalytic sites are hosted primarily by the beta subunits. The chain is ATP synthase subunit beta, chloroplastic from Marchantia polymorpha (Common liverwort).